The primary structure comprises 264 residues: General transcription factor IIF subunit 2 (264 aa).

This sequence belongs to the TFIIF beta subunit family. Heterodimer of an alpha and a beta subunit.

It is found in the nucleus. Its function is as follows. TFIIF is a general transcription initiation factor that binds to RNA polymerase II and helps to recruit it to the initiation complex in collaboration with TFIIB. The polypeptide is General transcription factor IIF subunit 2 (gtf2f2) (Xenopus laevis (African clawed frog)).